Here is a 141-residue protein sequence, read N- to C-terminus: HTH-type transcriptional repressor NsrR (141 aa).

Positions 2-129 (QLTNFTDFGL…DQHTIQDMLT (128 aa)) constitute an HTH rrf2-type domain. The segment at residues 28 to 51 (ITVVTETFDVSRNHMVKIINKLGQ) is a DNA-binding region (H-T-H motif). Positions 91, 96, and 102 each coordinate [2Fe-2S] cluster.

The cofactor is [2Fe-2S] cluster.

Its function is as follows. Nitric oxide-sensitive repressor of genes involved in protecting the cell against nitrosative stress. May require iron for activity. This chain is HTH-type transcriptional repressor NsrR, found in Aliivibrio salmonicida (strain LFI1238) (Vibrio salmonicida (strain LFI1238)).